The primary structure comprises 65 residues: uncharacterized protein (65 aa).

This is an uncharacterized protein from Rhizobium fredii (Sinorhizobium fredii).